The chain runs to 307 residues: Aspartate carbamoyltransferase catalytic subunit (307 aa).

Carbamoyl phosphate contacts are provided by arginine 54 and threonine 55. Lysine 83 contacts L-aspartate. The carbamoyl phosphate site is built by arginine 104, histidine 132, and glutamine 135. The L-aspartate site is built by arginine 165 and arginine 228. Residues leucine 267 and proline 268 each coordinate carbamoyl phosphate.

It belongs to the aspartate/ornithine carbamoyltransferase superfamily. ATCase family. As to quaternary structure, heterododecamer (2C3:3R2) of six catalytic PyrB chains organized as two trimers (C3), and six regulatory PyrI chains organized as three dimers (R2).

It catalyses the reaction carbamoyl phosphate + L-aspartate = N-carbamoyl-L-aspartate + phosphate + H(+). It functions in the pathway pyrimidine metabolism; UMP biosynthesis via de novo pathway; (S)-dihydroorotate from bicarbonate: step 2/3. Functionally, catalyzes the condensation of carbamoyl phosphate and aspartate to form carbamoyl aspartate and inorganic phosphate, the committed step in the de novo pyrimidine nucleotide biosynthesis pathway. The polypeptide is Aspartate carbamoyltransferase catalytic subunit (Clostridium perfringens (strain 13 / Type A)).